A 339-amino-acid chain; its full sequence is UDP-N-acetylglucosamine--N-acetylmuramyl-(pentapeptide) pyrophosphoryl-undecaprenol N-acetylglucosamine transferase (339 aa).

Residues 11–13 (TGG), asparagine 127, arginine 170, serine 188, isoleucine 235, and glutamine 280 each bind UDP-N-acetyl-alpha-D-glucosamine.

The protein belongs to the glycosyltransferase 28 family. MurG subfamily.

It is found in the cell inner membrane. The enzyme catalyses di-trans,octa-cis-undecaprenyl diphospho-N-acetyl-alpha-D-muramoyl-L-alanyl-D-glutamyl-meso-2,6-diaminopimeloyl-D-alanyl-D-alanine + UDP-N-acetyl-alpha-D-glucosamine = di-trans,octa-cis-undecaprenyl diphospho-[N-acetyl-alpha-D-glucosaminyl-(1-&gt;4)]-N-acetyl-alpha-D-muramoyl-L-alanyl-D-glutamyl-meso-2,6-diaminopimeloyl-D-alanyl-D-alanine + UDP + H(+). Its pathway is cell wall biogenesis; peptidoglycan biosynthesis. Its function is as follows. Cell wall formation. Catalyzes the transfer of a GlcNAc subunit on undecaprenyl-pyrophosphoryl-MurNAc-pentapeptide (lipid intermediate I) to form undecaprenyl-pyrophosphoryl-MurNAc-(pentapeptide)GlcNAc (lipid intermediate II). The protein is UDP-N-acetylglucosamine--N-acetylmuramyl-(pentapeptide) pyrophosphoryl-undecaprenol N-acetylglucosamine transferase of Thermotoga neapolitana (strain ATCC 49049 / DSM 4359 / NBRC 107923 / NS-E).